Consider the following 337-residue polypeptide: Terpene synthase 4 (337 aa).

Positions 94 and 98 each coordinate Mg(2+). A D(D/E)XX(D/E) motif motif is present at residues 94–98 (DDIFD). Position 195 (Arg-195) interacts with substrate. Residues Asn-241, Ser-245, and Glu-249 each contribute to the Mg(2+) site. The NSE motif signature appears at 241-249 (NDIYSYHRE). The WxxxxxRY motif motif lies at 320–327 (WSESCTRY).

It belongs to the terpene synthase family. Mg(2+) is required as a cofactor.

It catalyses the reaction (2E,6E)-farnesyl diphosphate = alpha-muurolene + diphosphate. The catalysed reaction is (2E,6E)-farnesyl diphosphate = (-)-(E)-beta-caryophyllene + diphosphate. Functionally, terpene synthase that catalyzes the cyclization of farnesyl diphosphate (FPP) into alpha-muurolene, (-)-beta-caryophyllene, and one unidentified sesquiterpene. TPS4 shows only trace monoterpene synthase activity with geranyl diphosphate (GPP) as substrate and produces very small amounts of myrcene. P.polycephalum has a unique biology and these volatile terpenoids could function in internal communication of P.polycephalum, to mark the territory that have been explored, or they may be involved in chemotaxis. The polypeptide is Terpene synthase 4 (Physarum polycephalum (Slime mold)).